We begin with the raw amino-acid sequence, 250 residues long: Glycerol uptake facilitator protein-like 5 (250 aa).

2 helical membrane-spanning segments follow: residues 12–32 (EFFGTLILVLLGNGAVANAFL) and 46–66 (GGWLLVASGYGLGVMLPAMMF). Positions 75–77 (NPA) match the NPA 1 motif. The next 3 helical transmembrane spans lie at 85–105 (IGIFPWAHVAPYLIWQFLGAI), 142–162 (LNGFVTEMVGTAVLIFGAMGL), and 172–192 (IDIANIGVGLLIAAMVISLGG). An NPA 2 motif is present at residues 199-201 (NPA). The chain crosses the membrane as a helical span at residues 230 to 250 (VVAPIVGAVIGIWIYKIFFGL).

It belongs to the MIP/aquaporin (TC 1.A.8) family.

The protein localises to the cell membrane. Probable transporter that facilitates the transmembrane diffusion of an unknown substrate. Is not permeable to water, dihydroxyacetone, glycerol, urea, H(2)O(2) and D/L-lactic acid. This is Glycerol uptake facilitator protein-like 5 from Lactiplantibacillus plantarum (strain ATCC BAA-793 / NCIMB 8826 / WCFS1) (Lactobacillus plantarum).